The following is a 255-amino-acid chain: Aliphatic sulfonates import ATP-binding protein SsuB (255 aa).

In terms of domain architecture, ABC transporter spans Leu-12–Leu-233. Gly-44–Ser-51 is an ATP binding site.

Belongs to the ABC transporter superfamily. Aliphatic sulfonates importer (TC 3.A.1.17.2) family. The complex is composed of two ATP-binding proteins (SsuB), two transmembrane proteins (SsuC) and a solute-binding protein (SsuA).

Its subcellular location is the cell inner membrane. The enzyme catalyses ATP + H2O + aliphatic sulfonate-[sulfonate-binding protein]Side 1 = ADP + phosphate + aliphatic sulfonateSide 2 + [sulfonate-binding protein]Side 1.. In terms of biological role, part of the ABC transporter complex SsuABC involved in aliphatic sulfonates import. Responsible for energy coupling to the transport system. In Escherichia coli O6:K15:H31 (strain 536 / UPEC), this protein is Aliphatic sulfonates import ATP-binding protein SsuB.